The chain runs to 420 residues: Glucose-1-phosphate adenylyltransferase (420 aa).

Alpha-D-glucose 1-phosphate is bound by residues tyrosine 107, glycine 173, glutamate 188–lysine 189, and serine 206.

It belongs to the bacterial/plant glucose-1-phosphate adenylyltransferase family. In terms of assembly, homotetramer.

The catalysed reaction is alpha-D-glucose 1-phosphate + ATP + H(+) = ADP-alpha-D-glucose + diphosphate. It functions in the pathway glycan biosynthesis; glycogen biosynthesis. In terms of biological role, involved in the biosynthesis of ADP-glucose, a building block required for the elongation reactions to produce glycogen. Catalyzes the reaction between ATP and alpha-D-glucose 1-phosphate (G1P) to produce pyrophosphate and ADP-Glc. This Shewanella oneidensis (strain ATCC 700550 / JCM 31522 / CIP 106686 / LMG 19005 / NCIMB 14063 / MR-1) protein is Glucose-1-phosphate adenylyltransferase.